The primary structure comprises 472 residues: DNA-cytosine methyltransferase (472 aa).

Residues 87–457 (FRFIDLFAGI…KLLEPKIKQA (371 aa)) form the SAM-dependent MTase C5-type domain. Cysteine 177 is a catalytic residue.

It belongs to the class I-like SAM-binding methyltransferase superfamily. C5-methyltransferase family.

The catalysed reaction is a 2'-deoxycytidine in DNA + S-adenosyl-L-methionine = a 5-methyl-2'-deoxycytidine in DNA + S-adenosyl-L-homocysteine + H(+). In terms of biological role, this methylase recognizes the double-stranded sequence 5'-CCWGG-3', methylates C-2 on both strands. This Escherichia coli O157:H7 protein is DNA-cytosine methyltransferase (dcm).